Consider the following 264-residue polypeptide: Major prion protein 1 (264 aa).

Positions 1-24 (MVKSHIGSWILVLFVAMWSDVALC) are cleaved as a signal peptide. An interaction with GRB2, ERI3 and SYN1 region spans residues 25–241 (KKRPKPGGGW…ESEAYYQRGA (217 aa)). Positions 28 to 118 (PKPGGGWNTG…QWNKPSKPKT (91 aa)) are disordered. 6 consecutive repeat copies span residues 54–62 (SQGGGGWGQ), 63–70 (PHGGGWGQ), 71–78 (PHGGGWGQ), 79–86 (PHGGGWGQ), 87–94 (PHGGGWGQ), and 95–103 (PHGGGGWGQ). A 6 X 8 AA tandem repeats of P-H-G-G-G-W-G-Q region spans residues 54 to 103 (SQGGGGWGQPHGGGWGQPHGGGWGQPHGGGWGQPHGGGWGQPHGGGGWGQ). The span at 55-107 (QGGGGWGQPHGGGWGQPHGGGWGQPHGGGWGQPHGGGWGQPHGGGGWGQGGTH) shows a compositional bias: gly residues. Cu(2+) is bound by residues His72, Gly73, Gly74, His80, Gly81, Gly82, His88, Gly89, Gly90, His96, Gly98, and Gly99. Cysteines 190 and 225 form a disulfide. Residues Asn192 and Asn208 are each glycosylated (N-linked (GlcNAc...) asparagine). Residue Ala241 is the site of GPI-anchor amidated alanine attachment. The propeptide at 242 to 264 (SVILFSSPPVILLISFLIFLIVG) is removed in mature form.

It belongs to the prion family. As to quaternary structure, monomer and homodimer. Has a tendency to aggregate into amyloid fibrils containing a cross-beta spine, formed by a steric zipper of superposed beta-strands. Soluble oligomers may represent an intermediate stage on the path to fibril formation. Copper binding may promote oligomerization. Interacts with GRB2, APP, ERI3/PRNPIP and SYN1. Mislocalized cytosolically exposed PrP interacts with MGRN1; this interaction alters MGRN1 subcellular location and causes lysosomal enlargement. Interacts with KIAA1191.

It localises to the cell membrane. The protein resides in the golgi apparatus. Its primary physiological function is unclear. Has cytoprotective activity against internal or environmental stresses. May play a role in neuronal development and synaptic plasticity. May be required for neuronal myelin sheath maintenance. May play a role in iron uptake and iron homeostasis. Soluble oligomers are toxic to cultured neuroblastoma cells and induce apoptosis (in vitro). Association with GPC1 (via its heparan sulfate chains) targets PRNP to lipid rafts. Also provides Cu(2+) or Zn(2+) for the ascorbate-mediated GPC1 deaminase degradation of its heparan sulfate side chains. This chain is Major prion protein 1, found in Tragelaphus strepsiceros (Greater kudu).